A 210-amino-acid chain; its full sequence is Chaperone protein TorD (210 aa).

This sequence belongs to the TorD/DmsD family. TorD subfamily.

The protein localises to the cytoplasm. Involved in the biogenesis of TorA. Acts on TorA before the insertion of the molybdenum cofactor and, as a result, probably favors a conformation of the apoenzyme that is competent for acquiring the cofactor. The protein is Chaperone protein TorD of Salmonella newport (strain SL254).